The primary structure comprises 154 residues: Large ribosomal subunit protein uL22c (154 aa).

The protein belongs to the universal ribosomal protein uL22 family. In terms of assembly, part of the 50S ribosomal subunit.

It is found in the plastid. The protein localises to the chloroplast. Functionally, this protein binds specifically to 23S rRNA. Its function is as follows. The globular domain of the protein is located near the polypeptide exit tunnel on the outside of the subunit, while an extended beta-hairpin is found that lines the wall of the exit tunnel in the center of the 70S ribosome. This chain is Large ribosomal subunit protein uL22c (rpl22), found in Jasminum nudiflorum (Winter jasmine).